A 396-amino-acid chain; its full sequence is Elongation factor Tu (396 aa).

The tr-type G domain maps to 10–206 (KLHVNVGTIG…ALDTHIPNPE (197 aa)). Residues 19–26 (GHVDHGKT) are G1. A GTP-binding site is contributed by 19 to 26 (GHVDHGKT). Threonine 26 lines the Mg(2+) pocket. The segment at 60 to 64 (GITIS) is G2. A G3 region spans residues 81–84 (DCPG). GTP contacts are provided by residues 81 to 85 (DCPGH) and 136 to 139 (NKAD). The segment at 136-139 (NKAD) is G4. The G5 stretch occupies residues 174–176 (SAL).

The protein belongs to the TRAFAC class translation factor GTPase superfamily. Classic translation factor GTPase family. EF-Tu/EF-1A subfamily. In terms of assembly, monomer.

The protein localises to the cytoplasm. The catalysed reaction is GTP + H2O = GDP + phosphate + H(+). Functionally, GTP hydrolase that promotes the GTP-dependent binding of aminoacyl-tRNA to the A-site of ribosomes during protein biosynthesis. This is Elongation factor Tu from Xylella fastidiosa (strain 9a5c).